The primary structure comprises 355 residues: S-adenosylmethionine:tRNA ribosyltransferase-isomerase (355 aa).

Belongs to the QueA family. Monomer.

It is found in the cytoplasm. It carries out the reaction 7-aminomethyl-7-carbaguanosine(34) in tRNA + S-adenosyl-L-methionine = epoxyqueuosine(34) in tRNA + adenine + L-methionine + 2 H(+). It functions in the pathway tRNA modification; tRNA-queuosine biosynthesis. Functionally, transfers and isomerizes the ribose moiety from AdoMet to the 7-aminomethyl group of 7-deazaguanine (preQ1-tRNA) to give epoxyqueuosine (oQ-tRNA). The chain is S-adenosylmethionine:tRNA ribosyltransferase-isomerase from Burkholderia ambifaria (strain MC40-6).